A 314-amino-acid polypeptide reads, in one-letter code: GTPase Era (314 aa).

Residues 21-189 (KSGFVGIIGR…QKTLINLLEP (169 aa)) enclose the Era-type G domain. The segment at 29-36 (GRPNVGKS) is G1. 29 to 36 (GRPNVGKS) is a GTP binding site. The interval 55 to 59 (QTTRN) is G2. The tract at residues 76–79 (DTPG) is G3. GTP contacts are provided by residues 76–80 (DTPGI) and 138–141 (NKSD). The interval 138–141 (NKSD) is G4. Residues 168-170 (FSA) are G5. The 85-residue stretch at 212-296 (IREQILQQTR…YLQLFVKVEP (85 aa)) folds into the KH type-2 domain.

This sequence belongs to the TRAFAC class TrmE-Era-EngA-EngB-Septin-like GTPase superfamily. Era GTPase family. As to quaternary structure, monomer.

The protein resides in the cytoplasm. It is found in the cell inner membrane. In terms of biological role, an essential GTPase that binds both GDP and GTP, with rapid nucleotide exchange. Plays a role in 16S rRNA processing and 30S ribosomal subunit biogenesis and possibly also in cell cycle regulation and energy metabolism. In Rippkaea orientalis (strain PCC 8801 / RF-1) (Cyanothece sp. (strain PCC 8801)), this protein is GTPase Era.